Here is a 206-residue protein sequence, read N- to C-terminus: Guanylate kinase (206 aa).

Residues 5 to 183 (FNLLILSGPS…SKEIILSIAK (179 aa)) form the Guanylate kinase-like domain. 12-19 (GPSGAGKS) lines the ATP pocket.

It belongs to the guanylate kinase family.

Its subcellular location is the cytoplasm. It catalyses the reaction GMP + ATP = GDP + ADP. Functionally, essential for recycling GMP and indirectly, cGMP. This chain is Guanylate kinase, found in Helicobacter pylori (strain HPAG1).